We begin with the raw amino-acid sequence, 212 residues long: Imidazole glycerol phosphate synthase subunit HisH (212 aa).

The region spanning Thr3–Trp212 is the Glutamine amidotransferase type-1 domain. The Nucleophile role is filled by Cys81. Catalysis depends on residues His190 and Glu192.

In terms of assembly, heterodimer of HisH and HisF.

It localises to the cytoplasm. The catalysed reaction is 5-[(5-phospho-1-deoxy-D-ribulos-1-ylimino)methylamino]-1-(5-phospho-beta-D-ribosyl)imidazole-4-carboxamide + L-glutamine = D-erythro-1-(imidazol-4-yl)glycerol 3-phosphate + 5-amino-1-(5-phospho-beta-D-ribosyl)imidazole-4-carboxamide + L-glutamate + H(+). It catalyses the reaction L-glutamine + H2O = L-glutamate + NH4(+). The protein operates within amino-acid biosynthesis; L-histidine biosynthesis; L-histidine from 5-phospho-alpha-D-ribose 1-diphosphate: step 5/9. Its function is as follows. IGPS catalyzes the conversion of PRFAR and glutamine to IGP, AICAR and glutamate. The HisH subunit catalyzes the hydrolysis of glutamine to glutamate and ammonia as part of the synthesis of IGP and AICAR. The resulting ammonia molecule is channeled to the active site of HisF. The chain is Imidazole glycerol phosphate synthase subunit HisH from Pseudomonas putida (strain ATCC 47054 / DSM 6125 / CFBP 8728 / NCIMB 11950 / KT2440).